A 108-amino-acid chain; its full sequence is ATP synthase epsilon chain (108 aa).

It belongs to the ATPase epsilon chain family. In terms of assembly, F-type ATPases have 2 components, CF(1) - the catalytic core - and CF(0) - the membrane proton channel. CF(1) has five subunits: alpha(3), beta(3), gamma(1), delta(1), epsilon(1). CF(0) has three main subunits: a, b and c.

It localises to the cell inner membrane. Produces ATP from ADP in the presence of a proton gradient across the membrane. The sequence is that of ATP synthase epsilon chain from Thermotoga maritima (strain ATCC 43589 / DSM 3109 / JCM 10099 / NBRC 100826 / MSB8).